The sequence spans 138 residues: Putative pre-16S rRNA nuclease (138 aa).

This sequence belongs to the YqgF nuclease family.

The protein resides in the cytoplasm. Functionally, could be a nuclease involved in processing of the 5'-end of pre-16S rRNA. The chain is Putative pre-16S rRNA nuclease from Geobacillus thermodenitrificans (strain NG80-2).